A 539-amino-acid chain; its full sequence is MSVLNIAVSRCSPTVAFCSLVILCILFKVLTRVREDRKIRSLGKYGHQIQSKLPLGIGFLYSMVKAVRAQKNFEFWRDNIFGASGRWTVETRIMNERTIFTADPGNIKAMLATQFSDYGKGAAFHAMWKDFLGNSIFATDGERWSASRKLIRPQFTRDRLSDLQCFEAHMQTLFRVLDAGGSPLDSKHAEETPMSQGKAIDIRDLLYRFTFDVSTDFLLGQDVQSLTTPRQEFAHAFDEVQRMQTIFVRSRHFSKFMSKKSFRDSLKVMNGFIHKHVRRALSLSPQETQQKSQSGSKYTFLEAIAGFTRDPTMLRDQIVGVLLAGRDTTAATLSWALYELSRHPEAVDALRREILQTVGSDAPTYDQLKNMPYLKAVLNETLRIYPAVPYNVRIALEDTTLPHGGGPDGSEPIAVLKNTKIAYSTLILHRRRDLYPATSEKFADPAIFSPDRWLHWHPSAHDYIPFSAGPRLCTGQQFALMEMSYVLCRLFQRFERVESHMQHIDGGNPTLKADIILSPGDGVWVSFHEPKQIDSNQLL.

The helical transmembrane segment at 15-31 threads the bilayer; it reads VAFCSLVILCILFKVLT. Residue asparagine 379 is glycosylated (N-linked (GlcNAc...) asparagine). Residue cysteine 473 coordinates heme.

It belongs to the cytochrome P450 family. Requires heme as cofactor.

It localises to the membrane. Its pathway is secondary metabolite biosynthesis. Its function is as follows. Cytochrome P450 monooxygenase; part of the gene cluster that mediates the biosynthesis of varicidin A, an antifungal natural product containing a cis-octahydrodecalin core. The PKS module of pvhA together with the enoylreductase pvhC catalyze the formation of the polyketide unit which is then conjugated to L-isoleucine by the condensation domain of the NRPS module. Activity of the Dieckmann cyclase domain (RED) of pvhA results in release of an acyclic tetramate. The cytochrome P450 monooxygenase pvhE then catalyzes the oxidation of the C21 methyl group to a to carboxylate group. The methyltransferase pvhD then further methylates the pvhE product. The Diels-Alderase pvhB is able to catalyze Diels-Alder cycloaddition using both pvhE and pvhD products as substrates to form the decalin ring, yielding varicidin B and A, respectively. This Talaromyces variabilis (Penicillium variabile) protein is Cytochrome P450 monooxygenase pvhE.